Here is a 474-residue protein sequence, read N- to C-terminus: Proline--tRNA ligase (474 aa).

This sequence belongs to the class-II aminoacyl-tRNA synthetase family. ProS type 3 subfamily. As to quaternary structure, homodimer.

The protein resides in the cytoplasm. It carries out the reaction tRNA(Pro) + L-proline + ATP = L-prolyl-tRNA(Pro) + AMP + diphosphate. In terms of biological role, catalyzes the attachment of proline to tRNA(Pro) in a two-step reaction: proline is first activated by ATP to form Pro-AMP and then transferred to the acceptor end of tRNA(Pro). In Aster yellows witches'-broom phytoplasma (strain AYWB), this protein is Proline--tRNA ligase.